The chain runs to 126 residues: Large ribosomal subunit protein bL12 (126 aa).

Positions 107–116 (EDAEKAKSQL) are enriched in basic and acidic residues. A disordered region spans residues 107–126 (EDAEKAKSQLEEAGATVELK).

The protein belongs to the bacterial ribosomal protein bL12 family. In terms of assembly, homodimer. Part of the ribosomal stalk of the 50S ribosomal subunit. Forms a multimeric L10(L12)X complex, where L10 forms an elongated spine to which 2 to 4 L12 dimers bind in a sequential fashion. Binds GTP-bound translation factors.

Its function is as follows. Forms part of the ribosomal stalk which helps the ribosome interact with GTP-bound translation factors. Is thus essential for accurate translation. This chain is Large ribosomal subunit protein bL12, found in Bifidobacterium adolescentis (strain ATCC 15703 / DSM 20083 / NCTC 11814 / E194a).